The following is a 40-amino-acid chain: RapK inhibitor (40 aa).

Propeptides lie at residues 1-34 (MKKL…IQVA) and glycine 40.

The protein belongs to the Phr family. In terms of processing, contains a predicted signal peptide cleavage site in the N-terminal region, however the propeptide is probably only subject to processing events at the ends of the mature peptide.

The protein resides in the secreted. It localises to the cytoplasm. Functionally, signaling molecule involved in the regulation of genetic competence development. Secreted during production, but the mature peptide acts intracellularly, indicating that it needs to be imported into the cell to function. Stimulates expression of the genes controlled by ComA, a transcriptional factor that regulates the development of genetic competence. Acts by inhibiting RapK, which regulates the activity of ComA. In Bacillus subtilis (strain 168), this protein is RapK inhibitor (phrK).